The following is a 616-amino-acid chain: Zinc metalloproteinase-disintegrin-like ecarin (616 aa).

The signal sequence occupies residues 1-20 (MIQILLVIICLAVFPYQGCS). Positions 21–190 (IILGSGNVND…EPIKKTLGLI (170 aa)) are excised as a propeptide. Residues 201–397 (KFIELVVVVD…YNPKCILDPP (197 aa)) form the Peptidase M12B domain. Glu204 contacts Ca(2+). N-linked (GlcNAc...) asparagine glycans are attached at residues Asn219 and Asn261. Asp288 contacts Ca(2+). 2 N-linked (GlcNAc...) asparagine glycosylation sites follow: Asn295 and Asn326. 3 cysteine pairs are disulfide-bonded: Cys312/Cys392, Cys352/Cys376, and Cys354/Cys359. His337 serves as a coordination point for Zn(2+). Residue Glu338 is part of the active site. Positions 341 and 347 each coordinate Zn(2+). Ca(2+)-binding residues include Cys392, Val407, Asn410, Ile412, Glu414, Glu417, and Asp420. Residues 405-491 (PAVCGNEIWE…ECPRNEFQRN (87 aa)) enclose the Disintegrin domain. 14 cysteine pairs are disulfide-bonded: Cys408-Cys437, Cys419-Cys432, Cys421-Cys427, Cys431-Cys454, Cys445-Cys451, Cys450-Cys476, Cys463-Cys483, Cys470-Cys502, Cys495-Cys507, Cys514-Cys567, Cys529-Cys578, Cys542-Cys555, Cys562-Cys604, and Cys598-Cys609. The D/ECD-tripeptide signature appears at 469 to 471 (DCD). Residues Asp471, Val472, and Asn486 each coordinate Ca(2+). The N-linked (GlcNAc...) asparagine glycan is linked to Asn497.

It belongs to the venom metalloproteinase (M12B) family. P-III subfamily. P-IIIa sub-subfamily. As to quaternary structure, monomer. It depends on Zn(2+) as a cofactor. In terms of tissue distribution, expressed by the venom gland.

It localises to the secreted. Snake venom zinc metalloproteinase that catalyzes the conversion of prothrombin (F2) to alpha-thrombin through formation of a thrombin intermediate, thereby functioning as a procoagulant protein. Has a low Km for prothrombin and a high kcat. Cleaves the 320-Arg-Ile-321 bond in prothrombin and produces meizothrombin which is ultimately converted to alpha-thrombin by autolysis. The polypeptide is Zinc metalloproteinase-disintegrin-like ecarin (Echis carinatus (Saw-scaled viper)).